The sequence spans 255 residues: Cullin-like protein 3 (255 aa).

This sequence belongs to the cullin family.

The sequence is that of Cullin-like protein 3 from Arabidopsis thaliana (Mouse-ear cress).